The following is a 123-amino-acid chain: Defensin beta 118 (123 aa).

The N-terminal stretch at 1-19 (MKLLLLALPMLVLLPQVIP) is a signal peptide. Disulfide bonds link Cys27/Cys54, Cys34/Cys48, and Cys38/Cys55. Positions 65–123 (VPATSPTPLSDSTPGIIDDILTVRFTTDYFEVSSKKDMVEESEAGRGTETSLPNVHHSS) are excised as a propeptide. The segment covering 100–110 (KDMVEESEAGR) has biased composition (basic and acidic residues). The tract at residues 100-123 (KDMVEESEAGRGTETSLPNVHHSS) is disordered. Residues 112–123 (TETSLPNVHHSS) are compositionally biased toward polar residues.

This sequence belongs to the beta-defensin family. Post-translationally, the three-dimensional structure formed by the three intramolecular disulfide bridges is indispensable for antimicrobial activity. High-level and epididymis-specific expression. Most abundant in the epithelium of the caput and present in the epididymis lumen and bound to sperm. Also expressed in pancreas.

It localises to the secreted. Functionally, host defense peptide that exhibits antimicrobial activity against both Gram-negative bacteria, such as E.coli and S.typhimurium, and Gram-positive bacteria, such as S.aureus and B.subtilis. Inhibits cell adhesion of E.coli on intestinal epithelial enterocytes. Causes rapid permeabilization of both the outer and inner membrane of E.coli, leading to morphological alterations on the bacterial surface. Binds to bacterial lipopolysaccharides (LPS) with high affinity, and may thereby be involved in immunoregulation through LPS neutralization. May contribute to epididymal innate immunity and protect the sperm against attack by microorganisms. This chain is Defensin beta 118 (DEFB118), found in Homo sapiens (Human).